The following is a 1418-amino-acid chain: Protein ced-11 (1418 aa).

7 consecutive transmembrane segments (helical) span residues 617–637 (FPIF…IIPV), 755–775 (YWLS…SVVL), 782–802 (LWDT…CFVL), 818–838 (VFDV…KVFP), 856–876 (VVSA…YIPL), 898–918 (FLFM…AVVF), and 986–1006 (IVIE…FAFF).

It is found in the membrane. Plays a major role in programmed cell death. This Caenorhabditis elegans protein is Protein ced-11 (ced-11).